The primary structure comprises 352 residues: Photosystem II D2 protein (352 aa).

Residues 40–60 (CAYLALGGWLTGTTFVTSWYT) traverse the membrane as a helical segment. Chlorophyll a is bound at residue H117. Residues 124-140 (GFMLRQFEIARLVGVRP) traverse the membrane as a helical segment. Pheophytin a is bound by residues Q129 and N142. A helical transmembrane segment spans residues 152-165 (VFVSVFLIYPLGQS). Position 197 (H197) interacts with chlorophyll a. A helical transmembrane segment spans residues 207–227 (GALLCAIHGATVENTLFQDGE). Positions 214 and 261 each coordinate a plastoquinone. H214 is a Fe cation binding site. Residue H268 participates in Fe cation binding. The chain crosses the membrane as a helical span at residues 278–294 (GLWMSSIGVVGLALNLR).

The protein belongs to the reaction center PufL/M/PsbA/D family. PSII is composed of 1 copy each of membrane proteins PsbA, PsbB, PsbC, PsbD, PsbE, PsbF, PsbH, PsbI, PsbJ, PsbK, PsbL, PsbM, PsbT, PsbX, PsbY, PsbZ, Psb30/Ycf12, peripheral proteins PsbO, CyanoQ (PsbQ), PsbU, PsbV and a large number of cofactors. It forms dimeric complexes. The cofactor is The D1/D2 heterodimer binds P680, chlorophylls that are the primary electron donor of PSII, and subsequent electron acceptors. It shares a non-heme iron and each subunit binds pheophytin, quinone, additional chlorophylls, carotenoids and lipids. There is also a Cl(-1) ion associated with D1 and D2, which is required for oxygen evolution. The PSII complex binds additional chlorophylls, carotenoids and specific lipids..

The protein localises to the cellular thylakoid membrane. The enzyme catalyses 2 a plastoquinone + 4 hnu + 2 H2O = 2 a plastoquinol + O2. In terms of biological role, photosystem II (PSII) is a light-driven water:plastoquinone oxidoreductase that uses light energy to abstract electrons from H(2)O, generating O(2) and a proton gradient subsequently used for ATP formation. It consists of a core antenna complex that captures photons, and an electron transfer chain that converts photonic excitation into a charge separation. The D1/D2 (PsbA/PsbD) reaction center heterodimer binds P680, the primary electron donor of PSII as well as several subsequent electron acceptors. D2 is needed for assembly of a stable PSII complex. This Synechococcus sp. (strain JA-2-3B'a(2-13)) (Cyanobacteria bacterium Yellowstone B-Prime) protein is Photosystem II D2 protein.